We begin with the raw amino-acid sequence, 590 residues long: Cell division protein FtsZ 1 (590 aa).

GTP-binding positions include 24–28 (GGGGN), 111–113 (GTG), Glu142, Arg146, and Asp190. 2 disordered regions span residues 346–372 (AAVP…QPLQ) and 524–590 (EATN…RQSS). Over residues 534–546 (AAAPSAASQQRRP) the composition is skewed to low complexity. A compositionally biased stretch (basic and acidic residues) spans 559–576 (GQLDDHGRAAPQMRSHED).

It belongs to the FtsZ family. As to quaternary structure, homodimer. Polymerizes to form a dynamic ring structure in a strictly GTP-dependent manner. Interacts directly with several other division proteins.

It is found in the cytoplasm. In terms of biological role, essential cell division protein that forms a contractile ring structure (Z ring) at the future cell division site. The regulation of the ring assembly controls the timing and the location of cell division. One of the functions of the FtsZ ring is to recruit other cell division proteins to the septum to produce a new cell wall between the dividing cells. Binds GTP and shows GTPase activity. The sequence is that of Cell division protein FtsZ 1 from Rhizobium meliloti (strain 1021) (Ensifer meliloti).